A 273-amino-acid polypeptide reads, in one-letter code: Shikimate dehydrogenase (NADP(+)) (273 aa).

Shikimate is bound by residues 19-21 (SQS) and T66. The active-site Proton acceptor is the K70. E82 serves as a coordination point for NADP(+). 2 residues coordinate shikimate: N91 and D107. Residues 131-135 (GAGGA) and M217 each bind NADP(+). Shikimate is bound at residue Y219. G241 provides a ligand contact to NADP(+).

This sequence belongs to the shikimate dehydrogenase family. Homodimer.

The enzyme catalyses shikimate + NADP(+) = 3-dehydroshikimate + NADPH + H(+). The protein operates within metabolic intermediate biosynthesis; chorismate biosynthesis; chorismate from D-erythrose 4-phosphate and phosphoenolpyruvate: step 4/7. Functionally, involved in the biosynthesis of the chorismate, which leads to the biosynthesis of aromatic amino acids. Catalyzes the reversible NADPH linked reduction of 3-dehydroshikimate (DHSA) to yield shikimate (SA). The protein is Shikimate dehydrogenase (NADP(+)) of Buchnera aphidicola subsp. Schizaphis graminum (strain Sg).